A 265-amino-acid chain; its full sequence is V0 assembly protein 1 (265 aa).

A signal peptide spans 1-24 (MVFGQLYALFIFTLSCCISKTVQA). Over 25–223 (DSSKESSSFI…ILSSIWTEGL (199 aa)) the chain is Vacuolar. N-linked (GlcNAc...) asparagine glycosylation is found at asparagine 69, asparagine 104, and asparagine 172. A helical membrane pass occupies residues 224 to 244 (LMCLIVSALLLFILIVALSWI). Residues 245–265 (SNLDITYGALEKSTNPIKKNN) lie on the Cytoplasmic side of the membrane. Residues 262 to 265 (KKNN) carry the ER retention motif motif.

Belongs to the VOA1 family. As to quaternary structure, V-ATPase is a heteromultimeric enzyme composed of a peripheral catalytic V1 complex (components A to H) attached to an integral membrane V0 proton pore complex (components: a, c, c', c'', d, e, f and VOA1). Interacts with VMA21. Associates with the assembling V0 complex.

The protein localises to the vacuole membrane. The protein resides in the endoplasmic reticulum membrane. Functionally, accessory component of the V0 complex of vacuolar(H+)-ATPase (V-ATPase), a multisubunit enzyme composed of a peripheral complex (V1) that hydrolyzes ATP and a membrane integral complex (V0) that translocates protons. V-ATPase is responsible for acidifying and maintaining the pH of intracellular compartments. Functions with VMA21 in assembly of the V0 complex. The polypeptide is V0 assembly protein 1 (VOA1) (Saccharomyces cerevisiae (strain ATCC 204508 / S288c) (Baker's yeast)).